We begin with the raw amino-acid sequence, 165 residues long: AIG2-like protein A (165 aa).

15–20 (YGSFQD) is a substrate binding site. E83 acts as the Proton acceptor in catalysis.

The protein belongs to the gamma-glutamylcyclotransferase family. In terms of tissue distribution, expressed only in seeds.

Functionally, putative gamma-glutamylcyclotransferase. The polypeptide is AIG2-like protein A (Arabidopsis thaliana (Mouse-ear cress)).